The sequence spans 218 residues: Adenylate kinase (218 aa).

10-15 lines the ATP pocket; sequence GAGKGT. The tract at residues 30-59 is NMP; it reads STGDMLRAAVKAGTPLGQQAKAVMDAGQLV. AMP is bound by residues threonine 31, arginine 36, 57–59, 85–88, and glutamine 92; these read QLV and GFPR. The segment at 122-159 is LID; it reads GRRSHPASGRTYHVKFNPPKVEGQDDVTGEPLVQREDD. Residues arginine 123 and 132–133 contribute to the ATP site; that span reads TY. Residues 127 to 151 are disordered; sequence PASGRTYHVKFNPPKVEGQDDVTGE. 2 residues coordinate AMP: arginine 156 and arginine 167. Glycine 203 contributes to the ATP binding site.

This sequence belongs to the adenylate kinase family. As to quaternary structure, monomer.

The protein resides in the cytoplasm. The catalysed reaction is AMP + ATP = 2 ADP. It functions in the pathway purine metabolism; AMP biosynthesis via salvage pathway; AMP from ADP: step 1/1. Functionally, catalyzes the reversible transfer of the terminal phosphate group between ATP and AMP. Plays an important role in cellular energy homeostasis and in adenine nucleotide metabolism. This Delftia acidovorans (strain DSM 14801 / SPH-1) protein is Adenylate kinase.